A 752-amino-acid polypeptide reads, in one-letter code: BCLAF1 and THRAP3 family member 3 (752 aa).

Basic residues predominate over residues 1–13 (MARSRSRSPRWKQ). Disordered stretches follow at residues 1-114 (MARS…YMPT), 132-177 (PTVQ…QMSL), and 190-252 (DELR…DPAR). Phosphoserine is present on residues S15 and S17. Residues 23-57 (FEYHEERHFHGHYDPEYRHDQQRPFTWRMDDEKHG) show a composition bias toward basic and acidic residues. Phosphoserine is present on residues S78 and S80. Positions 85-109 (PVEKFDTYKPHQEYFPGRGDDDRRS) are enriched in basic and acidic residues. The segment covering 190-199 (DELRHQRVQE) has biased composition (basic and acidic residues). S205 bears the Phosphoserine mark. Composition is skewed to basic and acidic residues over residues 222–231 (RYPEDHDFRK) and 238–252 (RPTDAARYENRDPAR). K416 is covalently cross-linked (Glycyl lysine isopeptide (Lys-Gly) (interchain with G-Cter in SUMO2)). Residue S592 is modified to Phosphoserine.

Belongs to the BCLAF1/THRAP3 family.

The protein localises to the mitochondrion. The chain is BCLAF1 and THRAP3 family member 3 from Mus musculus (Mouse).